Reading from the N-terminus, the 183-residue chain is Gamma-crystallin N-A (183 aa).

4 Beta/gamma crystallin 'Greek key' domains span residues 6–46, 47–89, 95–136, and 138–180; these read GKIV…RVES, GAWV…KPIK, YRME…KVYG, and GAWA…RRVV.

The protein belongs to the beta/gamma-crystallin family. In terms of assembly, monomer.

In terms of biological role, crystallins are the dominant structural components of the vertebrate eye lens. The polypeptide is Gamma-crystallin N-A (crygna) (Danio rerio (Zebrafish)).